A 198-amino-acid polypeptide reads, in one-letter code: V-type proton ATPase subunit E (198 aa).

This sequence belongs to the V-ATPase E subunit family.

In terms of biological role, produces ATP from ADP in the presence of a proton gradient across the membrane. The protein is V-type proton ATPase subunit E of Borrelia hermsii (strain HS1 / DAH).